The chain runs to 2324 residues: Myomegalin (2324 aa).

Coiled coils occupy residues 41-132, 158-205, 238-288, and 348-638; these read REDV…LVEA, QVKL…LLEE, DSHL…SLKE, and LFCS…NKQA. 2 disordered regions span residues 72–96 and 205–240; these read TWAD…EPQQ and EPGG…SDSH. Residues 85-96 show a composition bias toward basic and acidic residues; that stretch reads AELRRQVEEPQQ. Residues 219 to 238 are compositionally biased toward polar residues; sequence PTQQKPDLNETPTTQPSVSD. A disordered region spans residues 701–747; that stretch reads PAGATSVGPHHGEQTDQGSTQMPSRDDSTSLTAREEASIPRSTLGDS. Threonine 705 is subject to Phosphothreonine. The segment covering 724 to 738 has biased composition (basic and acidic residues); the sequence is SRDDSTSLTAREEAS. Coiled coils occupy residues 745–822, 855–923, and 1011–1043; these read GDSD…QLVD, ENRR…EEVL, and LRAE…GFSS. Disordered stretches follow at residues 1155 to 1182 and 1195 to 1216; these read LPSS…SLKL and NKSQ…STKH. Coiled coils occupy residues 1213–1241, 1346–1384, and 1430–1455; these read STKH…SEAT, TSDD…LSAT, and GLQA…PKTG. Disordered regions lie at residues 1540 to 1559, 1589 to 1610, 1628 to 1685, 1742 to 1773, 1857 to 1877, and 2081 to 2140; these read TDRL…KEEA, RFSS…SSTS, YTHY…IPKP, APPT…SPAR, LSST…GLES, and NQQP…TPPK. Residues 1550–1641 enclose the Olduvai domain; it reads KDHKSEKEEA…EEKKPSPSNS (92 aa). Low complexity-rich tracts occupy residues 1591–1610 and 1637–1646; these read SSPP…SSTS and SPSNSAASAS. Over residues 1743–1767 the composition is skewed to polar residues; sequence PPTSTSTLLSNHTEASSPRYSNPAQ. A coiled-coil region spans residues 1821-2056; sequence GADLLEEHLG…LRLQLEQQMD (236 aa). 2 stretches are compositionally biased toward polar residues: residues 2081–2090 and 2108–2135; these read NQQPPFQGSA and PSNS…SAAT. Positions 2248 to 2274 form a coiled coil; sequence EEGNLMEKELLDLRAQVSQQQQLLQST.

In terms of assembly, interacts with PDE4D. May interact with MAPRE1 and MAPRE3. May form a pericentrosomal complex with AKAP9, CDK5RAP2 and EB1/MAPRE1 in an isoform-specific manner; within this complex, may mediate MAPRE1-binding to CDK5RAP2. Interaction with AKAP9 stabilizes both proteins. May interact with CAMSAP2 in an isoform-specific manner; this interaction is much stronger in the presence of AKAP9. In complex with AKAP9, recruits CAMSAP2 to the Golgi apparatus. May interact with unglycosylated LGALS3BP in an isoform-specific manner; this interaction may connect the pericentrosomal complex to the gamma-tubulin ring complex (gamma-TuRC) to promote microtubule assembly and acetylation. Abundantly expressed in heart and skeletal muscle and to a lower extent in brain, lung and liver. Expressed in heart, skeletal muscle and testis (at protein level).

It localises to the cytoplasm. The protein resides in the cytoskeleton. It is found in the microtubule organizing center. The protein localises to the centrosome. Its subcellular location is the golgi apparatus. Its function is as follows. Functions as an anchor sequestering components of the cAMP-dependent pathway to Golgi and/or centrosomes. May participate in microtubule dynamics, promoting microtubule assembly, in an isoform-specific manner. Depending upon the cell context, may act at the level of the Golgi apparatus or that of the centrosome. In complex with AKAP9, recruits CAMSAP2 to the Golgi apparatus and tethers non-centrosomal minus-end microtubules to the Golgi, an important step for polarized cell movement. In complex with AKAP9, EB1/MAPRE1 and CDK5RAP2, contributes to microtubules nucleation and extension from the centrosome to the cell periphery, a crucial process for directed cell migration, mitotic spindle orientation and cell-cycle progression. In Rattus norvegicus (Rat), this protein is Myomegalin (Pde4dip).